Consider the following 335-residue polypeptide: Anthranilate phosphoribosyltransferase (335 aa).

Residues G80, 83 to 84, T88, 90 to 93, 108 to 116, and S120 each bind 5-phospho-alpha-D-ribose 1-diphosphate; these read GD, NIST, and KHGNRAVSS. An anthranilate-binding site is contributed by G80. S92 lines the Mg(2+) pocket. N111 serves as a coordination point for anthranilate. Residue R166 participates in anthranilate binding. D225 and E226 together coordinate Mg(2+).

Belongs to the anthranilate phosphoribosyltransferase family. Homodimer. The cofactor is Mg(2+).

It carries out the reaction N-(5-phospho-beta-D-ribosyl)anthranilate + diphosphate = 5-phospho-alpha-D-ribose 1-diphosphate + anthranilate. It participates in amino-acid biosynthesis; L-tryptophan biosynthesis; L-tryptophan from chorismate: step 2/5. Its function is as follows. Catalyzes the transfer of the phosphoribosyl group of 5-phosphorylribose-1-pyrophosphate (PRPP) to anthranilate to yield N-(5'-phosphoribosyl)-anthranilate (PRA). The protein is Anthranilate phosphoribosyltransferase of Clostridium kluyveri (strain NBRC 12016).